A 227-amino-acid polypeptide reads, in one-letter code: Type II restriction enzyme HhaII (227 aa).

As to quaternary structure, homodimer.

The catalysed reaction is Endonucleolytic cleavage of DNA to give specific double-stranded fragments with terminal 5'-phosphates.. Its function is as follows. A P subtype restriction enzyme that recognizes the double-stranded sequence 5'-GANTC-3' and cleaves after G-1. In Haemophilus parahaemolyticus, this protein is Type II restriction enzyme HhaII (hhaIIR).